The following is a 614-amino-acid chain: Probable indole-3-acetic acid-amido synthetase GH3.2 (614 aa).

Belongs to the IAA-amido conjugating enzyme family. Expressed in roots, flowers and callus.

Its function is as follows. May catalyze the synthesis of indole-3-acetic acid (IAA)-amino acid conjugates, providing a mechanism for the plant to cope with the presence of excess auxin. The polypeptide is Probable indole-3-acetic acid-amido synthetase GH3.2 (GH3.2) (Oryza sativa subsp. japonica (Rice)).